Here is a 282-residue protein sequence, read N- to C-terminus: Ubiquinone biosynthesis protein COQ4 homolog, mitochondrial (282 aa).

A mitochondrion-targeting transit peptide spans 1–30 (MFVRKSCYSLINATRRCLRYRQLSSTTAGT). Residues H186, D187, H190, and E202 each coordinate Zn(2+).

The protein belongs to the COQ4 family. Component of a multi-subunit COQ enzyme complex. The cofactor is Zn(2+).

Its subcellular location is the mitochondrion inner membrane. The enzyme catalyses a 4-hydroxy-3-methoxy-5-(all-trans-polyprenyl)benzoate + H(+) = a 2-methoxy-6-(all-trans-polyprenyl)phenol + CO2. It participates in cofactor biosynthesis; ubiquinone biosynthesis. Its function is as follows. Lyase that catalyzes the C1-decarboxylation of 4-hydroxy-3-methoxy-5-(all-trans-polyprenyl)benzoic acid into 2-methoxy-6-(all-trans-polyprenyl)phenol during ubiquinone biosynthesis. This chain is Ubiquinone biosynthesis protein COQ4 homolog, mitochondrial, found in Anopheles gambiae (African malaria mosquito).